The chain runs to 300 residues: Aspartate carbamoyltransferase catalytic subunit (300 aa).

The carbamoyl phosphate site is built by arginine 50 and threonine 51. Lysine 78 is a binding site for L-aspartate. Arginine 100, histidine 127, and glutamine 130 together coordinate carbamoyl phosphate. Residues arginine 160 and arginine 210 each coordinate L-aspartate. The carbamoyl phosphate site is built by alanine 253 and proline 254.

Belongs to the aspartate/ornithine carbamoyltransferase superfamily. ATCase family. Heterododecamer (2C3:3R2) of six catalytic PyrB chains organized as two trimers (C3), and six regulatory PyrI chains organized as three dimers (R2).

The catalysed reaction is carbamoyl phosphate + L-aspartate = N-carbamoyl-L-aspartate + phosphate + H(+). The protein operates within pyrimidine metabolism; UMP biosynthesis via de novo pathway; (S)-dihydroorotate from bicarbonate: step 2/3. Functionally, catalyzes the condensation of carbamoyl phosphate and aspartate to form carbamoyl aspartate and inorganic phosphate, the committed step in the de novo pyrimidine nucleotide biosynthesis pathway. The sequence is that of Aspartate carbamoyltransferase catalytic subunit from Staphylococcus saprophyticus subsp. saprophyticus (strain ATCC 15305 / DSM 20229 / NCIMB 8711 / NCTC 7292 / S-41).